The chain runs to 127 residues: PanD regulatory factor (127 aa).

The region spanning 1-127 (MKLTILRLEH…TAQHDGWEKR (127 aa)) is the N-acetyltransferase domain. CoA-binding positions include 66–68 (LRV) and 72–79 (TRRRGVGQ).

This sequence belongs to the PanZ/PanM family. In terms of assembly, interacts with PanD in the presence of CoA. Monomer.

Functionally, controls both the activation and catalytic activity of PanD in a coenzyme A (CoA)-dependent fashion. Binding of CoA or a derivative to PanM leads to interaction with PanD, which promotes the processing and activation of pro-PanD, and subsequent substrate-mediated inhibition of the active form of PanD. Lacks acetyltransferase activity. The sequence is that of PanD regulatory factor from Salmonella typhimurium (strain LT2 / SGSC1412 / ATCC 700720).